Consider the following 398-residue polypeptide: Acetate kinase 1 (398 aa).

Asn-9 contacts Mg(2+). Position 16 (Lys-16) interacts with ATP. Arg-89 lines the substrate pocket. The Proton donor/acceptor role is filled by Asp-146. ATP-binding positions include 206 to 210, 281 to 283, and 329 to 333; these read HLGNG, DCR, and GIGEN. Glu-384 is a binding site for Mg(2+).

Belongs to the acetokinase family. In terms of assembly, homodimer. Mg(2+) serves as cofactor. Requires Mn(2+) as cofactor.

The protein localises to the cytoplasm. It catalyses the reaction acetate + ATP = acetyl phosphate + ADP. It functions in the pathway metabolic intermediate biosynthesis; acetyl-CoA biosynthesis; acetyl-CoA from acetate: step 1/2. In terms of biological role, catalyzes the formation of acetyl phosphate from acetate and ATP. Can also catalyze the reverse reaction. This Vibrio vulnificus (strain CMCP6) protein is Acetate kinase 1.